Here is a 574-residue protein sequence, read N- to C-terminus: Lengsin (574 aa).

Disordered regions lie at residues Met-1–Lys-36 and Gly-66–Thr-131. Basic and acidic residues predominate over residues Asn-11 to Arg-23. Residues Ser-25 to Lys-36 are compositionally biased toward basic residues. Residues Asn-91–Thr-131 are compositionally biased toward polar residues. The GS beta-grasp domain maps to Asn-148–Gly-242. A GS catalytic domain is found at Pro-249–Ile-574.

It belongs to the glutamine synthetase family. In terms of assembly, dodecamer. Interacts with BFSP2 and VIM.

May act as a component of the cytoskeleton or as a chaperone for the reorganization of intermediate filament proteins during terminal differentiation in the lens. Does not seem to have enzymatic activity. The chain is Lengsin (LGSN) from Canis lupus familiaris (Dog).